A 572-amino-acid polypeptide reads, in one-letter code: Sulfite reductase [NADPH] hemoprotein beta-component (572 aa).

The [4Fe-4S] cluster site is built by Cys-437, Cys-443, Cys-482, and Cys-486. Residue Cys-486 participates in siroheme binding.

It belongs to the nitrite and sulfite reductase 4Fe-4S domain family. Alpha(8)-beta(8). The alpha component is a flavoprotein, the beta component is a hemoprotein. It depends on siroheme as a cofactor. Requires [4Fe-4S] cluster as cofactor.

It catalyses the reaction hydrogen sulfide + 3 NADP(+) + 3 H2O = sulfite + 3 NADPH + 4 H(+). It participates in sulfur metabolism; hydrogen sulfide biosynthesis; hydrogen sulfide from sulfite (NADPH route): step 1/1. Functionally, component of the sulfite reductase complex that catalyzes the 6-electron reduction of sulfite to sulfide. This is one of several activities required for the biosynthesis of L-cysteine from sulfate. This is Sulfite reductase [NADPH] hemoprotein beta-component from Lysinibacillus sphaericus (strain C3-41).